Reading from the N-terminus, the 111-residue chain is WAP four-disulfide core domain protein 12 (111 aa).

Positions 1–23 (MRSSRFLVLMVSLALVTLVASEG) are cleaved as a signal peptide. The WAP domain occupies 27–74 (NTEKPGVCPADNVRCIKSDPPQCHTDQDCQGIRKCCYLHCGFKCVIPV). Intrachain disulfides connect Cys34-Cys62, Cys41-Cys66, Cys49-Cys61, and Cys55-Cys70.

It is found in the secreted. Functionally, antibacterial protein. Putative acid-stable proteinase inhibitor. The protein is WAP four-disulfide core domain protein 12 (WFDC12) of Saimiri boliviensis boliviensis (Bolivian squirrel monkey).